Consider the following 252-residue polypeptide: Phosphonates import ATP-binding protein PhnC 1 (252 aa).

In terms of domain architecture, ABC transporter spans 2–244 (ISLNKLGVTY…QLEEIYQTLS (243 aa)). ATP is bound at residue 35 to 42 (GSSGAGKS).

It belongs to the ABC transporter superfamily. Phosphonates importer (TC 3.A.1.9.1) family. As to quaternary structure, the complex is composed of two ATP-binding proteins (PhnC), two transmembrane proteins (PhnE) and a solute-binding protein (PhnD).

It is found in the cell inner membrane. The catalysed reaction is phosphonate(out) + ATP + H2O = phosphonate(in) + ADP + phosphate + H(+). Its function is as follows. Part of the ABC transporter complex PhnCDE involved in phosphonates import. Responsible for energy coupling to the transport system. The polypeptide is Phosphonates import ATP-binding protein PhnC 1 (Trichodesmium erythraeum (strain IMS101)).